Here is a 137-residue protein sequence, read N- to C-terminus: Large ribosomal subunit protein uL16 (137 aa).

A compositionally biased stretch (basic residues) spans 1–16; the sequence is MLQPKRTKFRKMQKGR. The interval 1–22 is disordered; sequence MLQPKRTKFRKMQKGRIRGEAK.

It belongs to the universal ribosomal protein uL16 family. Part of the 50S ribosomal subunit.

In terms of biological role, binds 23S rRNA and is also seen to make contacts with the A and possibly P site tRNAs. The sequence is that of Large ribosomal subunit protein uL16 from Jannaschia sp. (strain CCS1).